A 553-amino-acid polypeptide reads, in one-letter code: Mannuronan C5-epimerase AlgE4 (553 aa).

PbH1 repeat units follow at residues 133–155 (DRDV…DPHE), 157–179 (TINL…VADY), 180–202 (LVDS…NVVT), 204–226 (THDF…VVQR), 234–256 (PSNI…LLKM), 257–279 (TSDI…RVYG), 280–301 (AQDV…AVPE), and 320–342 (TLNT…GIQE). Positions 367–427 (YGPHSTVSGE…DILDGGAGRD (61 aa)) are disordered. Hemolysin-type calcium-binding repeat units lie at residues 403–420 (QGGS…DDIL) and 421–438 (DGGA…ADTF).

It belongs to the D-mannuronate C5-epimerase family. Ca(2+) is required as a cofactor.

The protein resides in the secreted. It carries out the reaction [(1-&gt;4)-beta-D-mannuronosyl](n) = [alginate](n). It functions in the pathway glycan biosynthesis; alginate biosynthesis. Inhibited by zinc. In terms of biological role, converts beta-D-mannuronic acid (M) to alpha-L-guluronic acid (G), but introduces almost exclusively MG blocks, producing a polymer with non-gel-forming capacity. This is Mannuronan C5-epimerase AlgE4 from Azotobacter vinelandii.